Consider the following 653-residue polypeptide: Calpain-10 (653 aa).

Positions 13–321 (LFRDAAFPAA…FDEITIGYPI (309 aa)) constitute a Calpain catalytic domain. Residues Cys-73, His-238, and Asn-263 contribute to the active site. Domain III regions lie at residues 322 to 494 (TEAG…VSLS) and 513 to 653 (EWGT…PSWQ).

This sequence belongs to the peptidase C2 family.

In terms of biological role, calcium-regulated non-lysosomal thiol-protease which catalyzes limited proteolysis of substrates involved in cytoskeletal remodeling and signal transduction. May play a role in insulin-stimulated glucose uptake. This chain is Calpain-10 (CAPN10), found in Macaca fascicularis (Crab-eating macaque).